The sequence spans 122 residues: Large ribosomal subunit protein uL14 (122 aa).

The protein belongs to the universal ribosomal protein uL14 family. As to quaternary structure, part of the 50S ribosomal subunit. Forms a cluster with proteins L3 and L19. In the 70S ribosome, L14 and L19 interact and together make contacts with the 16S rRNA in bridges B5 and B8.

Binds to 23S rRNA. Forms part of two intersubunit bridges in the 70S ribosome. This chain is Large ribosomal subunit protein uL14, found in Laribacter hongkongensis (strain HLHK9).